A 264-amino-acid chain; its full sequence is Neurexophilin-2 (264 aa).

The N-terminal stretch at methionine 1 to serine 22 is a signal peptide. Positions lysine 23–isoleucine 90 are II. N-linked (GlcNAc...) asparagine glycans are attached at residues asparagine 86, asparagine 139, asparagine 149, and asparagine 155. Positions glutamine 91–phenylalanine 169 are III. Residues glutamate 170–glutamate 178 form an IV (linker domain) region. Residues threonine 179–glycine 264 are v (Cys-rich).

This sequence belongs to the neurexophilin family. In terms of processing, may be proteolytically processed at the boundary between the N-terminal non-conserved and the central conserved domain in neuron-like cells. Expressed in brain and kidney.

It is found in the secreted. Its function is as follows. May be signaling molecules that resemble neuropeptides and that act by binding to alpha-neurexins and possibly other receptors. This chain is Neurexophilin-2 (NXPH2), found in Homo sapiens (Human).